Reading from the N-terminus, the 402-residue chain is Acetate kinase (402 aa).

Residue asparagine 10 participates in Mg(2+) binding. Lysine 17 contributes to the ATP binding site. Arginine 89 is a substrate binding site. Aspartate 148 acts as the Proton donor/acceptor in catalysis. Residues 208 to 212 (HLGNG), 283 to 285 (DCR), and 334 to 338 (GIGEN) each bind ATP. Glutamate 389 lines the Mg(2+) pocket.

This sequence belongs to the acetokinase family. As to quaternary structure, homodimer. Mg(2+) serves as cofactor. It depends on Mn(2+) as a cofactor.

Its subcellular location is the cytoplasm. The enzyme catalyses acetate + ATP = acetyl phosphate + ADP. The protein operates within metabolic intermediate biosynthesis; acetyl-CoA biosynthesis; acetyl-CoA from acetate: step 1/2. Its function is as follows. Catalyzes the formation of acetyl phosphate from acetate and ATP. Can also catalyze the reverse reaction. This is Acetate kinase from Actinobacillus pleuropneumoniae serotype 7 (strain AP76).